Reading from the N-terminus, the 125-residue chain is Urotensin-2 (125 aa).

An N-terminal signal peptide occupies residues 1 to 20; that stretch reads MYKLASCCLLFIGFLNPLFS. Residues 21–111 constitute a propeptide that is removed on maturation; it reads LPLLDSGEVS…HLLARIRKPY (91 aa). An intrachain disulfide couples Cys119 to Cys124.

The protein belongs to the urotensin-2 family.

The protein resides in the secreted. Highly potent vasoconstrictor. In Macaca mulatta (Rhesus macaque), this protein is Urotensin-2 (UTS2).